Consider the following 432-residue polypeptide: Adenosylmethionine-8-amino-7-oxononanoate aminotransferase (432 aa).

Trp-52 lines the substrate pocket. Position 112-113 (112-113 (GS)) interacts with pyridoxal 5'-phosphate. Substrate is bound at residue Tyr-144. Asp-245 is a pyridoxal 5'-phosphate binding site. Residues Lys-274 and Gly-307 each coordinate substrate. At Lys-274 the chain carries N6-(pyridoxal phosphate)lysine. Residue 308 to 309 (PT) participates in pyridoxal 5'-phosphate binding. Arg-391 is a substrate binding site.

This sequence belongs to the class-III pyridoxal-phosphate-dependent aminotransferase family. BioA subfamily. Homodimer. It depends on pyridoxal 5'-phosphate as a cofactor.

The protein localises to the cytoplasm. It catalyses the reaction (8S)-8-amino-7-oxononanoate + S-adenosyl-L-methionine = S-adenosyl-4-methylsulfanyl-2-oxobutanoate + (7R,8S)-7,8-diammoniononanoate. It functions in the pathway cofactor biosynthesis; biotin biosynthesis; 7,8-diaminononanoate from 8-amino-7-oxononanoate (SAM route): step 1/1. Its function is as follows. Catalyzes the transfer of the alpha-amino group from S-adenosyl-L-methionine (SAM) to 7-keto-8-aminopelargonic acid (KAPA) to form 7,8-diaminopelargonic acid (DAPA). It is the only aminotransferase known to utilize SAM as an amino donor. This Buchnera aphidicola subsp. Schizaphis graminum (strain Sg) protein is Adenosylmethionine-8-amino-7-oxononanoate aminotransferase.